A 305-amino-acid chain; its full sequence is MSKKLTFQEIILTLQQFWNEQGCLLMQAYDTEKGAGTMSPYTFLRAIGPEPWNAAYVEPSRRPADGRYGENPNRLYQHHQFQVVMKPSPSNIQELYLESLERLGINPLEHDIRFVEDNWENPSTGSAGLGWEVWLDGMEITQFTYFQQVGGLATGPVTSEVTYSLERLASYIQEVDSVYDIEWADGVKYGEIFIQPEYEHSKYSFEVSDQDMLLENFTKFEKEAERALEEGLVHPAFDYVLKCSHTFNLLDARGAVSVTERAGYIARIRNLARVVAKTFVAERKKLGFPLLDEATRAELLKEDAE.

The protein belongs to the class-II aminoacyl-tRNA synthetase family. Tetramer of two alpha and two beta subunits.

It localises to the cytoplasm. The enzyme catalyses tRNA(Gly) + glycine + ATP = glycyl-tRNA(Gly) + AMP + diphosphate. The protein is Glycine--tRNA ligase alpha subunit of Streptococcus suis (strain 05ZYH33).